The sequence spans 876 residues: DNA mismatch repair protein MutS (876 aa).

626–633 (GPNMAGKS) provides a ligand contact to ATP. The segment at 829–856 (FRAAPPPPAPAAPPKASQVEERLRAIQP) is disordered. The segment covering 832-841 (APPPPAPAAP) has biased composition (pro residues).

The protein belongs to the DNA mismatch repair MutS family.

This protein is involved in the repair of mismatches in DNA. It is possible that it carries out the mismatch recognition step. This protein has a weak ATPase activity. The sequence is that of DNA mismatch repair protein MutS from Cereibacter sphaeroides (strain ATCC 17025 / ATH 2.4.3) (Rhodobacter sphaeroides).